Here is a 142-residue protein sequence, read N- to C-terminus: Small ribosomal subunit protein bS6 (142 aa).

Residues 96 to 142 are disordered; that stretch reads VTGQSEMLKAEENRSERRERRERPEHDGSADGDDSDSDSDNSDNADE. Basic and acidic residues predominate over residues 103-124; the sequence is LKAEENRSERRERRERPEHDGS. The segment covering 125–142 has biased composition (acidic residues); it reads ADGDDSDSDSDNSDNADE.

Belongs to the bacterial ribosomal protein bS6 family.

In terms of biological role, binds together with bS18 to 16S ribosomal RNA. The polypeptide is Small ribosomal subunit protein bS6 (Pseudomonas fluorescens (strain Pf0-1)).